A 98-amino-acid chain; its full sequence is Co-chaperonin GroES 4 (98 aa).

This sequence belongs to the GroES chaperonin family. As to quaternary structure, heptamer of 7 subunits arranged in a ring. Interacts with the chaperonin GroEL.

The protein resides in the cytoplasm. Functionally, together with the chaperonin GroEL, plays an essential role in assisting protein folding. The GroEL-GroES system forms a nano-cage that allows encapsulation of the non-native substrate proteins and provides a physical environment optimized to promote and accelerate protein folding. GroES binds to the apical surface of the GroEL ring, thereby capping the opening of the GroEL channel. This chain is Co-chaperonin GroES 4, found in Mesorhizobium japonicum (strain LMG 29417 / CECT 9101 / MAFF 303099) (Mesorhizobium loti (strain MAFF 303099)).